The primary structure comprises 80 residues: Exodeoxyribonuclease 7 small subunit (80 aa).

This sequence belongs to the XseB family. In terms of assembly, heterooligomer composed of large and small subunits.

Its subcellular location is the cytoplasm. The enzyme catalyses Exonucleolytic cleavage in either 5'- to 3'- or 3'- to 5'-direction to yield nucleoside 5'-phosphates.. In terms of biological role, bidirectionally degrades single-stranded DNA into large acid-insoluble oligonucleotides, which are then degraded further into small acid-soluble oligonucleotides. This Shigella sonnei (strain Ss046) protein is Exodeoxyribonuclease 7 small subunit.